Consider the following 191-residue polypeptide: uncharacterized protein (191 aa).

This is an uncharacterized protein from Bacillus subtilis (strain 168).